We begin with the raw amino-acid sequence, 419 residues long: uncharacterized protein (419 aa).

This sequence belongs to the MT-A70-like family.

Its subcellular location is the cytoplasm. This is an uncharacterized protein from Schizosaccharomyces pombe (strain 972 / ATCC 24843) (Fission yeast).